A 323-amino-acid polypeptide reads, in one-letter code: Serpentine receptor class gamma-5 (323 aa).

7 helical membrane passes run 31-51 (QLFYMVPGIIIHFRILSIMLF), 63-83 (FIIFSMDSIASLTQLILDLFI), 98-117 (YPLFEHYVLFPNIIFSIYNY), 151-171 (IPVTIAFITLSPFLVIWNVII), 193-213 (WASLSMFQMIFMAISLTITVF), 245-265 (AAFFSAALFQSYFAFFSITAA), and 272-292 (FLQGFAFDVLNVGSPIVMVLI).

The protein belongs to the nematode receptor-like protein srg family.

It localises to the membrane. This Caenorhabditis elegans protein is Serpentine receptor class gamma-5 (srg-5).